A 634-amino-acid polypeptide reads, in one-letter code: 3-dehydroshikimate dehydratase (634 aa).

4 residues coordinate a divalent metal cation: glutamate 134, aspartate 165, glutamine 191, and glutamate 239. VOC domains follow at residues 295–414 (GIEF…LVER) and 440–590 (RVDH…VFTE). Mg(2+) is bound by residues histidine 443, histidine 521, and glutamate 599.

The protein belongs to the bacterial two-domain DSD family. As to quaternary structure, homodimer. Requires Co(2+) as cofactor. It depends on Ni(2+) as a cofactor. The cofactor is Mg(2+). Mn(2+) serves as cofactor.

The enzyme catalyses 3-dehydroshikimate = 3,4-dihydroxybenzoate + H2O. Its pathway is aromatic compound metabolism; 3,4-dihydroxybenzoate biosynthesis. In terms of biological role, catalyzes the conversion of 3-dehydroshikimate to protocatechuate (3,4-dihydroxybenzoate), a common intermediate of quinate and shikimate degradation pathways. Is required for growth on either quinate or shikimate as a sole carbon source. The protein is 3-dehydroshikimate dehydratase of Pseudomonas aeruginosa (strain ATCC 15692 / DSM 22644 / CIP 104116 / JCM 14847 / LMG 12228 / 1C / PRS 101 / PAO1).